A 576-amino-acid chain; its full sequence is Arginine--tRNA ligase (576 aa).

A 'HIGH' region motif is present at residues 122–132 (PNVAKQMHVGH).

It belongs to the class-I aminoacyl-tRNA synthetase family. In terms of assembly, monomer.

The protein localises to the cytoplasm. It carries out the reaction tRNA(Arg) + L-arginine + ATP = L-arginyl-tRNA(Arg) + AMP + diphosphate. The polypeptide is Arginine--tRNA ligase (Yersinia enterocolitica serotype O:8 / biotype 1B (strain NCTC 13174 / 8081)).